Here is a 503-residue protein sequence, read N- to C-terminus: MKIKTDEITSVLKQEILNYKKDLGVDEVGTVLEIGDGIARVYGLKNVMSGEMVEFQNGIFGQAFNLEDNSVGVVVYGDYLAIQEGFTVKRTSRILEVPVGPELLGRVVNPLGEPLDGKGPINAKLTRPVESPAPGIAMRQPVGEPMQTGIKAIDAMIPIGRGQRELIIGDRGTGKTSIALDTIINQKGTGVICVYVAIGQKASTVASTVEMLRNKGALEYTIVVSATAAEPAPLQYIAPYSGCSMAEYFMYNEKKATLVVYDDLSKQAVAYRQMSLLLRRPPGREAYPGDVFYLHSRLLERAAKLDDKYGAGSLTALPIIETQEGEVSAYIPTNVISITDGQIYLQSNLFASGNRPAVDVGISVSRVGSAAQIKAMKQVAGKMKLELAQFRDLEAFAQLGTELDPATQAQLDRGNRIVQMLKQPVSSPFPVEEQVVEIFAVTRGFMDKIPVPKVQQYGKFLLTRIKEQHSEVLEAIRKEKKISDEEKLGEVLSAIAEEFLRKH.

Position 169 to 176 (169 to 176) interacts with ATP; it reads GDRGTGKT.

The protein belongs to the ATPase alpha/beta chains family. In terms of assembly, F-type ATPases have 2 components, CF(1) - the catalytic core - and CF(0) - the membrane proton channel. CF(1) has five subunits: alpha(3), beta(3), gamma(1), delta(1), epsilon(1). CF(0) has three main subunits: a(1), b(2) and c(9-12). The alpha and beta chains form an alternating ring which encloses part of the gamma chain. CF(1) is attached to CF(0) by a central stalk formed by the gamma and epsilon chains, while a peripheral stalk is formed by the delta and b chains.

It is found in the cell inner membrane. It carries out the reaction ATP + H2O + 4 H(+)(in) = ADP + phosphate + 5 H(+)(out). In terms of biological role, produces ATP from ADP in the presence of a proton gradient across the membrane. The alpha chain is a regulatory subunit. The polypeptide is ATP synthase subunit alpha (Leptospira borgpetersenii serovar Hardjo-bovis (strain L550)).